The following is a 121-amino-acid chain: Large ribosomal subunit protein bL20 (121 aa).

Belongs to the bacterial ribosomal protein bL20 family.

Functionally, binds directly to 23S ribosomal RNA and is necessary for the in vitro assembly process of the 50S ribosomal subunit. It is not involved in the protein synthesizing functions of that subunit. The chain is Large ribosomal subunit protein bL20 from Beijerinckia indica subsp. indica (strain ATCC 9039 / DSM 1715 / NCIMB 8712).